Consider the following 346-residue polypeptide: Glycosyltransferase 1 domain-containing protein 1 (346 aa).

An N-terminal signal peptide occupies residues 1 to 16 (MRLLFLAVLRPHTGNA).

It belongs to the glycosyltransferase group 1 family. Glycosyltransferase 4 subfamily.

It localises to the secreted. The protein is Glycosyltransferase 1 domain-containing protein 1 (GLT1D1) of Pongo abelii (Sumatran orangutan).